Consider the following 436-residue polypeptide: Xaa-Arg dipeptidase (436 aa).

The protein belongs to the peptidase M20A family.

It carries out the reaction beta-alanyl-L-lysine + H2O = beta-alanine + L-lysine. The enzyme catalyses beta-alanyl-L-ornithine + H2O = beta-alanine + L-ornithine. It catalyses the reaction N(2)-(4-aminobutanoyl)-L-lysine + H2O = 4-aminobutanoate + L-lysine. The catalysed reaction is N(2)-(4-aminobutanoyl)-L-ornithine + H2O = 4-aminobutanoate + L-ornithine. It carries out the reaction N(2)-(4-aminobutanoyl)-L-arginine + H2O = 4-aminobutanoate + L-arginine. Catalyzes the peptide bond hydrolysis in dipeptides having basic amino acids lysine, ornithine or arginine at C-terminus. Postulated to function in a metabolite repair mechanism by eliminating alternate dipeptide by-products formed during carnosine synthesis. The protein is Xaa-Arg dipeptidase of Homo sapiens (Human).